A 465-amino-acid polypeptide reads, in one-letter code: ATP synthase subunit beta (465 aa).

148–155 (GGAGVGKT) lines the ATP pocket.

The protein belongs to the ATPase alpha/beta chains family. As to quaternary structure, F-type ATPases have 2 components, CF(1) - the catalytic core - and CF(0) - the membrane proton channel. CF(1) has five subunits: alpha(3), beta(3), gamma(1), delta(1), epsilon(1). CF(0) has three main subunits: a(1), b(2) and c(9-12). The alpha and beta chains form an alternating ring which encloses part of the gamma chain. CF(1) is attached to CF(0) by a central stalk formed by the gamma and epsilon chains, while a peripheral stalk is formed by the delta and b chains.

Its subcellular location is the cell inner membrane. It carries out the reaction ATP + H2O + 4 H(+)(in) = ADP + phosphate + 5 H(+)(out). Produces ATP from ADP in the presence of a proton gradient across the membrane. The catalytic sites are hosted primarily by the beta subunits. This chain is ATP synthase subunit beta, found in Chromobacterium violaceum (strain ATCC 12472 / DSM 30191 / JCM 1249 / CCUG 213 / NBRC 12614 / NCIMB 9131 / NCTC 9757 / MK).